A 148-amino-acid chain; its full sequence is UPF0756 membrane protein YeaL (148 aa).

Helical transmembrane passes span alanine 14–valine 34, leucine 51–leucine 71, leucine 86–methionine 106, and valine 121–valine 141.

It belongs to the UPF0756 family.

It is found in the cell membrane. The protein is UPF0756 membrane protein YeaL of Salmonella choleraesuis (strain SC-B67).